A 108-amino-acid chain; its full sequence is UPF0235 protein MM_0822 (108 aa).

This sequence belongs to the UPF0235 family.

In Methanosarcina mazei (strain ATCC BAA-159 / DSM 3647 / Goe1 / Go1 / JCM 11833 / OCM 88) (Methanosarcina frisia), this protein is UPF0235 protein MM_0822.